A 367-amino-acid polypeptide reads, in one-letter code: Queuine tRNA-ribosyltransferase (367 aa).

Asp-92 functions as the Proton acceptor in the catalytic mechanism. Substrate-binding positions include 92–96, Asp-146, Gln-188, and Gly-215; that span reads DSGGF. The tract at residues 246–252 is RNA binding; that stretch reads GVGTPKD. Catalysis depends on Asp-265, which acts as the Nucleophile. Positions 303, 305, 308, and 334 each coordinate Zn(2+).

Belongs to the queuine tRNA-ribosyltransferase family. In terms of assembly, homodimer. Within each dimer, one monomer is responsible for RNA recognition and catalysis, while the other monomer binds to the replacement base PreQ1. Zn(2+) is required as a cofactor.

It catalyses the reaction 7-aminomethyl-7-carbaguanine + guanosine(34) in tRNA = 7-aminomethyl-7-carbaguanosine(34) in tRNA + guanine. Its pathway is tRNA modification; tRNA-queuosine biosynthesis. In terms of biological role, catalyzes the base-exchange of a guanine (G) residue with the queuine precursor 7-aminomethyl-7-deazaguanine (PreQ1) at position 34 (anticodon wobble position) in tRNAs with GU(N) anticodons (tRNA-Asp, -Asn, -His and -Tyr). Catalysis occurs through a double-displacement mechanism. The nucleophile active site attacks the C1' of nucleotide 34 to detach the guanine base from the RNA, forming a covalent enzyme-RNA intermediate. The proton acceptor active site deprotonates the incoming PreQ1, allowing a nucleophilic attack on the C1' of the ribose to form the product. After dissociation, two additional enzymatic reactions on the tRNA convert PreQ1 to queuine (Q), resulting in the hypermodified nucleoside queuosine (7-(((4,5-cis-dihydroxy-2-cyclopenten-1-yl)amino)methyl)-7-deazaguanosine). This is Queuine tRNA-ribosyltransferase from Francisella tularensis subsp. mediasiatica (strain FSC147).